We begin with the raw amino-acid sequence, 353 residues long: S-adenosylmethionine:tRNA ribosyltransferase-isomerase (353 aa).

Belongs to the QueA family. In terms of assembly, monomer.

The protein localises to the cytoplasm. It carries out the reaction 7-aminomethyl-7-carbaguanosine(34) in tRNA + S-adenosyl-L-methionine = epoxyqueuosine(34) in tRNA + adenine + L-methionine + 2 H(+). The protein operates within tRNA modification; tRNA-queuosine biosynthesis. In terms of biological role, transfers and isomerizes the ribose moiety from AdoMet to the 7-aminomethyl group of 7-deazaguanine (preQ1-tRNA) to give epoxyqueuosine (oQ-tRNA). This is S-adenosylmethionine:tRNA ribosyltransferase-isomerase from Marinomonas sp. (strain MWYL1).